Consider the following 419-residue polypeptide: Acetyltransferase fsoF (419 aa).

Residue asparagine 2 is glycosylated (N-linked (GlcNAc...) asparagine). Transmembrane regions (helical) follow at residues 4–24 and 62–82; these read TIISLALIFFQLTTTALVVGF and AFLGAASVFLVILYVDAAILS. The tract at residues 89 to 114 is disordered; the sequence is QSPTSSLGGLIPPTTRDTPKTQNNAT. 2 N-linked (GlcNAc...) asparagine glycosylation sites follow: asparagine 112 and asparagine 169. The next 4 helical transmembrane spans lie at 230 to 250, 314 to 334, 337 to 357, and 386 to 406; these read YWAIQYAVIDLLYSLLAVVAV, YVFMTLVFAVSGVFHTLSDVS, IPLGESGAMRFFVLQAIGIML, and VSGPVWLVTWLTWTSPGWIYM.

Belongs to the wax synthase family.

The protein resides in the membrane. It carries out the reaction 3-O-(beta-D-glucopyranosyl)-2alpha-hydroxyisomotiol + acetyl-CoA = 3-O-(beta-D-glucopyranosyl)-2alpha-acetoxyisomotiol + CoA. It catalyses the reaction 2-deacetylfuscoatroside + acetyl-CoA = fuscoatroside + CoA. Its pathway is secondary metabolite biosynthesis; terpenoid biosynthesis. Functionally, terpene cyclase-glycosyl transferase fusion protein; part of the gene cluster that mediates the biosynthesis of the enfumafungin-type antibiotic, fuscoatroside. Within the pathway, fsoF catalyzes the acetylation of C2-alpha-OH following the C2 hydroxylation by the cytochrome monooxygenase fsoD. The fuscoatroside biosynthesis is initiated by the cyclization of 2,3(S)-oxidosqualene through FsoA's terpene cyclase (TC) domain, leading to the formation of the fernane skeleton isomotiol, harboring a fernane triterpene skeleton with a C8-C9 double bond. Subsequently, C2-alpha-hydroxylation mediated by fsoD results in the production of 2-alpha-hydroxy-isomotiol, which is further acetylated by fsoF. The glycosyltransferase (GT) domain of FsoA may convert isomotiol, 2-alpha-hydroxy-isomotiol, and the acetylated derivative of 2-alpha-hydroxy-isomotiol into their corresponding glycosides 3-O-(beta-D-glucopyranosyl)-isomotiol, 3-O-(beta-D-glucopyranosyl)-2-alpha-hydroxy-isomotiol, and 3-O-(beta-D-glucopyranosyl)-2-alpha-acetoxy-isomotiol, which then undergo oxidative cleavage under the action of fsoE to form s 2-deacetoxy-fuscoatroside, 2-deacetyl-fuscoatroside, and fuscoatroside, respectively. Although hydroxylation followed by acetylation of 3-O-(beta-D-glucopyranosyl)-isomotiol and 2-deacetoxy-fuscoatroside by fsoD and fsoF could not be ruled out, this process is likely to occur with difficulty due to bulky steric hindrance caused by the presence of a glycan at C3 in these compounds. Interestingly, fsoE can also utilize the aglycones isomotiol and 2-alpha-hydroxy-isomotiol as substrates to generate 19-beta-hydroxy-isomotiol and 2-alpha,19-beta-dihydroxy-isomotiol, respectively. These reactions occur with lower efficiency. Finally, fsoE can further convert 2-alpha,19-beta-dihydroxy-isomotiol into 2-alpha-hydroxy-ismotiol-19-one and 2-alpha-hydroxy-ismotiol-19-one into 2-deacetyl-3-deglucopyranosyl-fuscoatroside. This chain is Acetyltransferase fsoF, found in Humicola fuscoatra.